The primary structure comprises 196 residues: Large ribosomal subunit protein uL6 (196 aa).

The protein belongs to the universal ribosomal protein uL6 family. In terms of assembly, part of the 50S ribosomal subunit.

Its function is as follows. This protein binds to the 23S rRNA, and is important in its secondary structure. It is located near the subunit interface in the base of the L7/L12 stalk, and near the tRNA binding site of the peptidyltransferase center. The chain is Large ribosomal subunit protein uL6 from Archaeoglobus fulgidus (strain ATCC 49558 / DSM 4304 / JCM 9628 / NBRC 100126 / VC-16).